The primary structure comprises 273 residues: Dermonecrotic toxin LdSicTox-alphaIB1bi (273 aa).

Residue His5 is part of the active site. Glu25 and Asp27 together coordinate Mg(2+). His41 functions as the Nucleophile in the catalytic mechanism. 2 disulfides stabilise this stretch: Cys45-Cys51 and Cys47-Cys190. Asp85 contributes to the Mg(2+) binding site. Residue Asn250 is glycosylated (N-linked (GlcNAc...) asparagine).

Belongs to the arthropod phospholipase D family. Class II subfamily. Mg(2+) serves as cofactor. In terms of tissue distribution, expressed by the venom gland.

It is found in the secreted. It catalyses the reaction an N-(acyl)-sphingosylphosphocholine = an N-(acyl)-sphingosyl-1,3-cyclic phosphate + choline. It carries out the reaction an N-(acyl)-sphingosylphosphoethanolamine = an N-(acyl)-sphingosyl-1,3-cyclic phosphate + ethanolamine. The catalysed reaction is a 1-acyl-sn-glycero-3-phosphocholine = a 1-acyl-sn-glycero-2,3-cyclic phosphate + choline. The enzyme catalyses a 1-acyl-sn-glycero-3-phosphoethanolamine = a 1-acyl-sn-glycero-2,3-cyclic phosphate + ethanolamine. Its function is as follows. Dermonecrotic toxins cleave the phosphodiester linkage between the phosphate and headgroup of certain phospholipids (sphingolipid and lysolipid substrates), forming an alcohol (often choline) and a cyclic phosphate. This toxin acts on sphingomyelin (SM). It may also act on ceramide phosphoethanolamine (CPE), lysophosphatidylcholine (LPC) and lysophosphatidylethanolamine (LPE), but not on lysophosphatidylserine (LPS), and lysophosphatidylglycerol (LPG). It acts by transphosphatidylation, releasing exclusively cyclic phosphate products as second products. Induces dermonecrosis, hemolysis, increased vascular permeability, edema, inflammatory response, and platelet aggregation. This Loxosceles deserta (Desert recluse spider) protein is Dermonecrotic toxin LdSicTox-alphaIB1bi.